We begin with the raw amino-acid sequence, 243 residues long: Pyridoxine 5'-phosphate synthase (243 aa).

N9 provides a ligand contact to 3-amino-2-oxopropyl phosphate. 1-deoxy-D-xylulose 5-phosphate is bound at residue 11 to 12 (DH). R20 lines the 3-amino-2-oxopropyl phosphate pocket. H45 serves as the catalytic Proton acceptor. 1-deoxy-D-xylulose 5-phosphate contacts are provided by R47 and H52. E72 functions as the Proton acceptor in the catalytic mechanism. Residue T102 participates in 1-deoxy-D-xylulose 5-phosphate binding. Residue H193 is the Proton donor of the active site. Residues G194 and 215-216 (GH) each bind 3-amino-2-oxopropyl phosphate.

It belongs to the PNP synthase family. Homooctamer; tetramer of dimers.

The protein localises to the cytoplasm. It carries out the reaction 3-amino-2-oxopropyl phosphate + 1-deoxy-D-xylulose 5-phosphate = pyridoxine 5'-phosphate + phosphate + 2 H2O + H(+). The protein operates within cofactor biosynthesis; pyridoxine 5'-phosphate biosynthesis; pyridoxine 5'-phosphate from D-erythrose 4-phosphate: step 5/5. Its function is as follows. Catalyzes the complicated ring closure reaction between the two acyclic compounds 1-deoxy-D-xylulose-5-phosphate (DXP) and 3-amino-2-oxopropyl phosphate (1-amino-acetone-3-phosphate or AAP) to form pyridoxine 5'-phosphate (PNP) and inorganic phosphate. The chain is Pyridoxine 5'-phosphate synthase from Escherichia coli O6:H1 (strain CFT073 / ATCC 700928 / UPEC).